Here is a 178-residue protein sequence, read N- to C-terminus: Non-specific lipid transfer protein-like 1 (178 aa).

Positions 1–26 (MAVAARAAAVACLLVVGLAAVAGVDG) are cleaved as a signal peptide. Cystine bridges form between cysteine 50-cysteine 68 and cysteine 69-cysteine 110. Asparagine 99 carries N-linked (GlcNAc...) asparagine glycosylation. Alanine 149 is lipidated: GPI-anchor amidated alanine. Residues 150–178 (AARSPMASTTAVLVVAAAVAAPLLAFFHF) constitute a propeptide, removed in mature form.

Belongs to the plant LTP family. Post-translationally, O-glycosylated on hydroxyprolines; noncontiguous hydroxylproline residues are glycosylated with arabinogalactan. Expressed in roots, stems, leaves, flowers and seeds.

The protein resides in the vacuole. It localises to the aleurone grain membrane. In Oryza sativa subsp. japonica (Rice), this protein is Non-specific lipid transfer protein-like 1 (LTPL1).